Here is a 152-residue protein sequence, read N- to C-terminus: Nucleoside diphosphate kinase (152 aa).

Residues Lys-11, Phe-59, Arg-87, Thr-93, Arg-104, and Asn-114 each contribute to the ATP site. His-117 serves as the catalytic Pros-phosphohistidine intermediate.

The protein belongs to the NDK family. In terms of assembly, homotetramer. Mg(2+) serves as cofactor.

It is found in the cytoplasm. The enzyme catalyses a 2'-deoxyribonucleoside 5'-diphosphate + ATP = a 2'-deoxyribonucleoside 5'-triphosphate + ADP. It carries out the reaction a ribonucleoside 5'-diphosphate + ATP = a ribonucleoside 5'-triphosphate + ADP. In terms of biological role, major role in the synthesis of nucleoside triphosphates other than ATP. The ATP gamma phosphate is transferred to the NDP beta phosphate via a ping-pong mechanism, using a phosphorylated active-site intermediate. The polypeptide is Nucleoside diphosphate kinase (Prochlorococcus marinus (strain MIT 9215)).